The primary structure comprises 407 residues: Phospholipase A1-II 7 (407 aa).

S230 (acyl-ester intermediate) is an active-site residue. Active-site charge relay system residues include S230, D299, and H336.

Belongs to the AB hydrolase superfamily. Lipase family.

The protein resides in the cytoplasm. Functionally, acylhydrolase that catalyzes the hydrolysis of phospholipids at the sn-1 position. This is Phospholipase A1-II 7 from Oryza sativa subsp. indica (Rice).